A 556-amino-acid polypeptide reads, in one-letter code: Probable glucomannan 4-beta-mannosyltransferase 3 (556 aa).

A helical membrane pass occupies residues Ile-56 to Leu-76. The active site involves Asp-159. 2 residues coordinate substrate: Asp-218 and Asp-220. Asp-312 is an active-site residue. Helical transmembrane passes span Ile-391–Phe-411, Ile-428–Leu-448, Leu-509–Tyr-529, and Phe-530–Gly-550.

The protein belongs to the glycosyltransferase 2 family. Plant cellulose synthase-like A subfamily.

Its subcellular location is the golgi apparatus membrane. The enzyme catalyses GDP-mannose + (glucomannan)n = GDP + (glucomannan)n+1.. In terms of biological role, probable mannan synthase which consists of a 4-beta-mannosyltransferase activity on mannan using GDP-mannose. The beta-1,4-mannan product is the backbone for galactomannan synthesis by galactomannan galactosyltransferase. Galactomannan is a noncellulosic polysaccharides of plant cell wall. The protein is Probable glucomannan 4-beta-mannosyltransferase 3 of Arabidopsis thaliana (Mouse-ear cress).